A 463-amino-acid polypeptide reads, in one-letter code: A-type ATP synthase subunit B (463 aa).

Belongs to the ATPase alpha/beta chains family. In terms of assembly, has multiple subunits with at least A(3), B(3), C, D, E, F, H, I and proteolipid K(x).

It is found in the cell membrane. Component of the A-type ATP synthase that produces ATP from ADP in the presence of a proton gradient across the membrane. The B chain is a regulatory subunit. The sequence is that of A-type ATP synthase subunit B from Saccharolobus islandicus (strain Y.N.15.51 / Yellowstone #2) (Sulfolobus islandicus).